Here is a 214-residue protein sequence, read N- to C-terminus: Urease accessory protein UreG (214 aa).

GTP is bound at residue 23 to 30 (GPVGSGKT).

The protein belongs to the SIMIBI class G3E GTPase family. UreG subfamily. Homodimer. UreD, UreF and UreG form a complex that acts as a GTP-hydrolysis-dependent molecular chaperone, activating the urease apoprotein by helping to assemble the nickel containing metallocenter of UreC. The UreE protein probably delivers the nickel.

It localises to the cytoplasm. Its function is as follows. Facilitates the functional incorporation of the urease nickel metallocenter. This process requires GTP hydrolysis, probably effectuated by UreG. In Bordetella pertussis (strain Tohama I / ATCC BAA-589 / NCTC 13251), this protein is Urease accessory protein UreG.